The sequence spans 318 residues: NADH-ubiquinone oxidoreductase chain 1 (318 aa).

8 consecutive transmembrane segments (helical) span residues 2–22 (PMINLLLLIMSILIAMAFLML), 76–96 (ALALTIALLLWTPLPMPIPLI), 100–120 (LGLLFILAASSLTVYSILWSG), 146–166 (LALILLSVLLMSGSFNLSALI), 171–191 (HSWLLLPSWPLALMWFISTLA), 222–242 (LFFMAEYTNIILMNALTTMIF), 253–273 (ELYTTLFTIKTLLLTSLFLWI), and 294–314 (LPLTLALLMWHISVPIATSGI).

The protein belongs to the complex I subunit 1 family. Core subunit of respiratory chain NADH dehydrogenase (Complex I) which is composed of 45 different subunits.

The protein resides in the mitochondrion inner membrane. It carries out the reaction a ubiquinone + NADH + 5 H(+)(in) = a ubiquinol + NAD(+) + 4 H(+)(out). In terms of biological role, core subunit of the mitochondrial membrane respiratory chain NADH dehydrogenase (Complex I) which catalyzes electron transfer from NADH through the respiratory chain, using ubiquinone as an electron acceptor. Essential for the catalytic activity and assembly of complex I. This is NADH-ubiquinone oxidoreductase chain 1 (MT-ND1) from Pongo abelii (Sumatran orangutan).